The following is a 241-amino-acid chain: Uracil-DNA glycosylase (241 aa).

The Proton acceptor role is filled by Asp68.

The protein belongs to the uracil-DNA glycosylase (UDG) superfamily. UNG family.

It is found in the cytoplasm. It carries out the reaction Hydrolyzes single-stranded DNA or mismatched double-stranded DNA and polynucleotides, releasing free uracil.. Its function is as follows. Excises uracil residues from the DNA which can arise as a result of misincorporation of dUMP residues by DNA polymerase or due to deamination of cytosine. The sequence is that of Uracil-DNA glycosylase from Rhizobium meliloti (strain 1021) (Ensifer meliloti).